Here is a 324-residue protein sequence, read N- to C-terminus: tRNA dimethylallyltransferase (324 aa).

Residue Gly17–Thr24 participates in ATP binding. Thr19 to Thr24 serves as a coordination point for substrate. 3 interaction with substrate tRNA regions span residues Asp42–Leu45, Gln166–Arg170, and Arg251–Arg256.

The protein belongs to the IPP transferase family. In terms of assembly, monomer. The cofactor is Mg(2+).

The catalysed reaction is adenosine(37) in tRNA + dimethylallyl diphosphate = N(6)-dimethylallyladenosine(37) in tRNA + diphosphate. Functionally, catalyzes the transfer of a dimethylallyl group onto the adenine at position 37 in tRNAs that read codons beginning with uridine, leading to the formation of N6-(dimethylallyl)adenosine (i(6)A). This Burkholderia pseudomallei (strain 668) protein is tRNA dimethylallyltransferase.